Here is a 181-residue protein sequence, read N- to C-terminus: Oligoribonuclease (181 aa).

The Exonuclease domain occupies 8–171 (LIWVDLEMTG…DDIRESIAEL (164 aa)). Residue Tyr129 is part of the active site.

This sequence belongs to the oligoribonuclease family.

It localises to the cytoplasm. Its function is as follows. 3'-to-5' exoribonuclease specific for small oligoribonucleotides. In Vibrio parahaemolyticus serotype O3:K6 (strain RIMD 2210633), this protein is Oligoribonuclease.